Consider the following 325-residue polypeptide: Acetyl-coenzyme A carboxylase carboxyl transferase subunit alpha (325 aa).

Positions 44 to 298 (QLEARADQLR…KAAIQDNLQA (255 aa)) constitute a CoA carboxyltransferase C-terminal domain.

Belongs to the AccA family. In terms of assembly, acetyl-CoA carboxylase is a heterohexamer composed of biotin carboxyl carrier protein (AccB), biotin carboxylase (AccC) and two subunits each of ACCase subunit alpha (AccA) and ACCase subunit beta (AccD).

It is found in the cytoplasm. It carries out the reaction N(6)-carboxybiotinyl-L-lysyl-[protein] + acetyl-CoA = N(6)-biotinyl-L-lysyl-[protein] + malonyl-CoA. The protein operates within lipid metabolism; malonyl-CoA biosynthesis; malonyl-CoA from acetyl-CoA: step 1/1. Its function is as follows. Component of the acetyl coenzyme A carboxylase (ACC) complex. First, biotin carboxylase catalyzes the carboxylation of biotin on its carrier protein (BCCP) and then the CO(2) group is transferred by the carboxyltransferase to acetyl-CoA to form malonyl-CoA. The chain is Acetyl-coenzyme A carboxylase carboxyl transferase subunit alpha from Picosynechococcus sp. (strain ATCC 27264 / PCC 7002 / PR-6) (Agmenellum quadruplicatum).